A 793-amino-acid chain; its full sequence is Ankyrin repeat domain-containing protein SOWAHB (793 aa).

Disordered stretches follow at residues 83–185 (EEGL…QARA), 219–290 (ATAE…ELLT), 337–360 (QLPL…SSHS), and 396–543 (DFVD…SPRV). Composition is skewed to low complexity over residues 96 to 108 (APSA…CSPR), 134 to 144 (AGAAARAADAA), and 175 to 185 (AAAAAGAQARA). Phosphoserine is present on S106. Over residues 220-244 (TAEEKPARALPAQDDRGASREREEG) the composition is skewed to basic and acidic residues. Positions 246–273 (LAEPAPVPAVAHSPPATVEAATSRASPP) are enriched in low complexity. Position 271 is a phosphoserine (S271). Residues 396–406 (DFVDQESDGSE) show a composition bias toward acidic residues. Low complexity-rich tracts occupy residues 407–417 (ESSSGPKDSPG) and 498–508 (RSSLAGRAKLS). A compositionally biased stretch (basic residues) spans 521-533 (KRSRRPPRSRKPS). ANK repeat units follow at residues 630–659 (TGYT…KAGI) and 669–699 (CGYT…RVNV). S761 bears the Phosphoserine mark.

This sequence belongs to the SOWAH family.

This chain is Ankyrin repeat domain-containing protein SOWAHB (SOWAHB), found in Homo sapiens (Human).